The following is a 118-amino-acid chain: Ribonuclease P protein component (118 aa).

This sequence belongs to the RnpA family. Consists of a catalytic RNA component (M1 or rnpB) and a protein subunit.

It catalyses the reaction Endonucleolytic cleavage of RNA, removing 5'-extranucleotides from tRNA precursor.. RNaseP catalyzes the removal of the 5'-leader sequence from pre-tRNA to produce the mature 5'-terminus. It can also cleave other RNA substrates such as 4.5S RNA. The protein component plays an auxiliary but essential role in vivo by binding to the 5'-leader sequence and broadening the substrate specificity of the ribozyme. The polypeptide is Ribonuclease P protein component (Rickettsia felis (strain ATCC VR-1525 / URRWXCal2) (Rickettsia azadi)).